The chain runs to 192 residues: uncharacterized protein (192 aa).

The protein belongs to the CAPAB/TerDEXZ family.

This is an uncharacterized protein from Bacillus subtilis (strain 168).